Here is a 142-residue protein sequence, read N- to C-terminus: Transcriptional regulator MraZ (142 aa).

SpoVT-AbrB domains lie at 5-51 (ASAL…PRPE) and 77-120 (AADV…DAAT).

Belongs to the MraZ family. Forms oligomers.

The protein resides in the cytoplasm. It localises to the nucleoid. This Cupriavidus taiwanensis (strain DSM 17343 / BCRC 17206 / CCUG 44338 / CIP 107171 / LMG 19424 / R1) (Ralstonia taiwanensis (strain LMG 19424)) protein is Transcriptional regulator MraZ.